We begin with the raw amino-acid sequence, 166 residues long: Large ribosomal subunit protein uL10 (166 aa).

Belongs to the universal ribosomal protein uL10 family. As to quaternary structure, part of the ribosomal stalk of the 50S ribosomal subunit. The N-terminus interacts with L11 and the large rRNA to form the base of the stalk. The C-terminus forms an elongated spine to which L12 dimers bind in a sequential fashion forming a multimeric L10(L12)X complex.

In terms of biological role, forms part of the ribosomal stalk, playing a central role in the interaction of the ribosome with GTP-bound translation factors. The chain is Large ribosomal subunit protein uL10 from Streptococcus gordonii (strain Challis / ATCC 35105 / BCRC 15272 / CH1 / DL1 / V288).